We begin with the raw amino-acid sequence, 664 residues long: DNA-directed DNA polymerase (664 aa).

The disordered stretch occupies residues 352–378; it reads RRQKDDESDGTAGAAYGRLSSEHPNLQ.

Belongs to the DNA polymerase type-A family. DpoZ subfamily.

The enzyme catalyses DNA(n) + a 2'-deoxyribonucleoside 5'-triphosphate = DNA(n+1) + diphosphate. Its function is as follows. DNA polymerase that replicates the viral genomic DNA. Also incorporates 5-hydroxymethyl-2'-deoxyuridine (5-hmdU) instead of dTMP into DNA during replication, as an early step in the pathway of thymidine hypermodifications of the viral genome. As a final result of the pathway of hypermodification, 5-aminoethyl-2'-deoxyuridine (5-NedU) substitutes for about 30% of thymidines in the viral DNA. These modifications probably prevent degradation of viral genome by the host restriction-modification antiviral defense system. The chain is DNA-directed DNA polymerase (gp62) from Pseudomonas phage M6.